The following is a 198-amino-acid chain: MTPLALIMIIIAYLLGSISSAVLICRLKGLPDPRTSGSHNPGATNVFRIGGRSAAGLVLLCDILKGMLPVWGGYFLEINPFMLGIIAISACLGHMYPLFFHFKGGKGVATALGALAPIGLDLTGMLFGCWVVTVLVTGYSSLASMITALLAPLFTWLVKPQYTLPVAMLSCLIVLKHHENIKRFFEGKETKIWQRKRD.

The next 5 helical transmembrane spans lie at leucine 4–isoleucine 24, serine 53–phenylalanine 75, proline 80–phenylalanine 102, leucine 112–valine 132, and valine 134–phenylalanine 154.

The protein belongs to the PlsY family. As to quaternary structure, probably interacts with PlsX.

The protein resides in the cell inner membrane. It carries out the reaction an acyl phosphate + sn-glycerol 3-phosphate = a 1-acyl-sn-glycero-3-phosphate + phosphate. It participates in lipid metabolism; phospholipid metabolism. In terms of biological role, catalyzes the transfer of an acyl group from acyl-phosphate (acyl-PO(4)) to glycerol-3-phosphate (G3P) to form lysophosphatidic acid (LPA). This enzyme utilizes acyl-phosphate as fatty acyl donor, but not acyl-CoA or acyl-ACP. The chain is Glycerol-3-phosphate acyltransferase from Aliivibrio fischeri (strain ATCC 700601 / ES114) (Vibrio fischeri).